We begin with the raw amino-acid sequence, 326 residues long: tRNA U34 carboxymethyltransferase (326 aa).

Residues Lys95, Trp109, Lys114, Gly134, 184 to 185 (VE), Tyr204, and Arg319 contribute to the carboxy-S-adenosyl-L-methionine site.

This sequence belongs to the class I-like SAM-binding methyltransferase superfamily. CmoB family.

It catalyses the reaction carboxy-S-adenosyl-L-methionine + 5-hydroxyuridine(34) in tRNA = 5-carboxymethoxyuridine(34) in tRNA + S-adenosyl-L-homocysteine + H(+). In terms of biological role, catalyzes carboxymethyl transfer from carboxy-S-adenosyl-L-methionine (Cx-SAM) to 5-hydroxyuridine (ho5U) to form 5-carboxymethoxyuridine (cmo5U) at position 34 in tRNAs. The chain is tRNA U34 carboxymethyltransferase from Trichodesmium erythraeum (strain IMS101).